Consider the following 350-residue polypeptide: S-adenosylmethionine:tRNA ribosyltransferase-isomerase (350 aa).

The protein belongs to the QueA family. In terms of assembly, monomer.

The protein localises to the cytoplasm. It catalyses the reaction 7-aminomethyl-7-carbaguanosine(34) in tRNA + S-adenosyl-L-methionine = epoxyqueuosine(34) in tRNA + adenine + L-methionine + 2 H(+). Its pathway is tRNA modification; tRNA-queuosine biosynthesis. Transfers and isomerizes the ribose moiety from AdoMet to the 7-aminomethyl group of 7-deazaguanine (preQ1-tRNA) to give epoxyqueuosine (oQ-tRNA). This Aliivibrio fischeri (strain MJ11) (Vibrio fischeri) protein is S-adenosylmethionine:tRNA ribosyltransferase-isomerase.